The following is an 87-amino-acid chain: U3-theraphotoxin-Hhn1a 2 (87 aa).

The N-terminal stretch at 1–24 (MVNMKASMFLTFAGLVLLFVVCYA) is a signal peptide. A propeptide spanning residues 25-52 (SESEEKEFPKEMLSSIFAVDDDFKQEER) is cleaved from the precursor. Intrachain disulfides connect Cys-54/Cys-67, Cys-61/Cys-72, and Cys-66/Cys-79.

The protein belongs to the neurotoxin 10 (Hwtx-1) family. 51 (Hntx-8) subfamily. Hntx-8 sub-subfamily. As to expression, expressed by the venom gland.

It is found in the secreted. Functionally, ion channel inhibitor. This Cyriopagopus hainanus (Chinese bird spider) protein is U3-theraphotoxin-Hhn1a 2.